The following is a 438-amino-acid chain: Ubiquitin carboxyl-terminal hydrolase 27 (438 aa).

Residues 78–421 (RGLINLGNTC…EGYLLFYHKQ (344 aa)) form the USP domain. Cysteine 87 acts as the Nucleophile in catalysis. Histidine 380 (proton acceptor) is an active-site residue.

Belongs to the peptidase C19 family. As to quaternary structure, interacts with phosphorylated BCL2L11 isoform BIMEL; this interaction leads to BCL2L11 deubiquitination and stabilization.

It is found in the cytoplasm. The protein localises to the cytosol. Its subcellular location is the nucleus. It carries out the reaction Thiol-dependent hydrolysis of ester, thioester, amide, peptide and isopeptide bonds formed by the C-terminal Gly of ubiquitin (a 76-residue protein attached to proteins as an intracellular targeting signal).. Functionally, deubiquitinase involved in innate antiviral immunity by mediating deubiquitination of CGAS and RIGI. Negatively regulates RIGI by mediating 'Lys-63'-linked deubiquitination of RIGI, inhibiting type I interferon signaling. Also regulates 'Lys-63'-linked ubiquitination level of MDA5/IFIH1. Acts as a positive regulator of the cGAS-STING pathway by catalyzing 'Lys-48'-linked deubiquitination of CGAS, thereby promoting its stabilization. Can reduce the levels of BCL2L11/BIM ubiquitination and stabilize BCL2L11 in response to the RAF-MAPK-degradation signal. By acting on BCL2L11 levels, may counteract the anti-apoptotic effects of MAPK activity. The protein is Ubiquitin carboxyl-terminal hydrolase 27 of Homo sapiens (Human).